We begin with the raw amino-acid sequence, 352 residues long: MEDGKKAASMSAEKQKALAAALAQIEKQFGKGSIMKMGDAEVEPVQVVSTGSLGLDVALGVGGLPRGRVVEIYGPESSGKTTLTLQVVAEMQKLGGTCAFIDAEHALDVTYADKLGVKVPDLLISQPDTGEQALEIADALVRSGSVDLIVIDSVAALVPKAEIEGEMGDALPGLQARLMSQALRKLTGTIKRTNCLVIFINQIRMKIGVMFGSPETTTGGNALKFYASVRLDIRRIGSIKKGDEVVGNETKVKVVKNKVAPPFREAIFDILYGAGVSREGEIIDLGVEAKVVEKSGAWYSYNGERIGQGRDNCREFLRENAELAREIENKVREHLGVTPMGAVTLAEEVEED.

74 to 81 is an ATP binding site; it reads GPESSGKT.

This sequence belongs to the RecA family.

Its subcellular location is the cytoplasm. Its function is as follows. Can catalyze the hydrolysis of ATP in the presence of single-stranded DNA, the ATP-dependent uptake of single-stranded DNA by duplex DNA, and the ATP-dependent hybridization of homologous single-stranded DNAs. It interacts with LexA causing its activation and leading to its autocatalytic cleavage. This Ralstonia nicotianae (strain ATCC BAA-1114 / GMI1000) (Ralstonia solanacearum) protein is Protein RecA.